Reading from the N-terminus, the 194-residue chain is Imidazoleglycerol-phosphate dehydratase (194 aa).

This sequence belongs to the imidazoleglycerol-phosphate dehydratase family.

It localises to the cytoplasm. It catalyses the reaction D-erythro-1-(imidazol-4-yl)glycerol 3-phosphate = 3-(imidazol-4-yl)-2-oxopropyl phosphate + H2O. The protein operates within amino-acid biosynthesis; L-histidine biosynthesis; L-histidine from 5-phospho-alpha-D-ribose 1-diphosphate: step 6/9. The protein is Imidazoleglycerol-phosphate dehydratase of Bacillus cereus (strain ZK / E33L).